A 271-amino-acid polypeptide reads, in one-letter code: Ubiquitin thioesterase OTUB1 (271 aa).

Position 2 is an N-acetylalanine (A2). S16 is subject to Phosphoserine. Y26 carries the post-translational modification Phosphotyrosine. In terms of domain architecture, OTU spans 80 to 271; the sequence is SYIRKTRPDG…RPGHYDILYK (192 aa). The active site involves D88. The Nucleophile role is filled by C91. 2 ubiquitin-conjugating enzyme E2 binding regions span residues 130-138 and 169-177; these read FTEFTIEDF and DYLVVYLRL. Positions 189–195 are free ubiquitin binding; it reads FFEHFIE. The tract at residues 206-213 is ubiquitin-conjugating enzyme E2 binding; sequence QEVEPMCK. Free ubiquitin binding regions lie at residues 214 to 221 and 245 to 251; these read ESDHIHII and NPHVFPE. The active site involves H265.

Belongs to the peptidase C65 family. In terms of assembly, interacts with RNF128. Forms a ternary complex with RNF128 and USP8. Interacts with FUS and RACK1. Interacts with UBE2D1/UBCH5A, UBE2W/UBC16 and UBE2N/UBC13. Post-translationally, phosphorylation at Tyr-26 by SRC and SRMS promotes deubiquitination of RPTOR via a non-catalytic process.

The protein localises to the cytoplasm. It carries out the reaction Thiol-dependent hydrolysis of ester, thioester, amide, peptide and isopeptide bonds formed by the C-terminal Gly of ubiquitin (a 76-residue protein attached to proteins as an intracellular targeting signal).. Its activity is regulated as follows. By free ubiquitin: binding of free ubiquitin triggers conformational changes in the OTU domain and formation of a ubiquitin-binding helix in the N-terminus, promoting binding of the conjugated donor ubiquitin in UBE2N/UBC13 to OTUB1. Its function is as follows. Hydrolase that can specifically remove compared to 'Lys-48'-linked conjugated ubiquitin from proteins and plays an important regulatory role at the level of protein turnover by preventing degradation. Regulator of T-cell anergy, a phenomenon that occurs when T-cells are rendered unresponsive to antigen rechallenge and no longer respond to their cognate antigen. Acts via its interaction with RNF128/GRAIL. Surprisingly, it regulates RNF128-mediated ubiquitination, but does not deubiquitinate polyubiquitinated RNF128. Deubiquitinates estrogen receptor alpha (ESR1). Mediates deubiquitination of 'Lys-48'-linked polyubiquitin chains, but not 'Lys-63'-linked polyubiquitin chains. Not able to cleave di-ubiquitin. Also capable of removing NEDD8 from NEDD8 conjugates, but with a much lower preference compared to 'Lys-48'-linked ubiquitin. Functionally, plays a key non-catalytic role in DNA repair regulation by inhibiting activity of RNF168, an E3 ubiquitin-protein ligase that promotes accumulation of 'Lys-63'-linked histone H2A and H2AX at DNA damage sites. Inhibits RNF168 independently of ubiquitin thioesterase activity by binding and inhibiting UBE2N/UBC13, the E2 partner of RNF168, thereby limiting spreading of 'Lys-63'-linked histone H2A and H2AX marks. Inhibition occurs by binding to free ubiquitin: free ubiquitin acts as an allosteric regulator that increases affinity for UBE2N/UBC13 and disrupts interaction with UBE2V1. The OTUB1-UBE2N/UBC13-free ubiquitin complex adopts a configuration that mimics a cleaved 'Lys48'-linked di-ubiquitin chain. Acts as a regulator of mTORC1 and mTORC2 complexes. When phosphorylated at Tyr-26, acts as an activator of the mTORC1 complex by mediating deubiquitination of RPTOR via a non-catalytic process: acts by binding and inhibiting the activity of the ubiquitin-conjugating enzyme E2 (UBE2D1/UBCH5A, UBE2W/UBC16 and UBE2N/UBC13), thereby preventing ubiquitination of RPTOR. Can also act as an inhibitor of the mTORC1 and mTORC2 complexes in response to amino acids by mediating non-catalytic deubiquitination of DEPTOR. This is Ubiquitin thioesterase OTUB1 (Otub1) from Mus musculus (Mouse).